We begin with the raw amino-acid sequence, 103 residues long: Small ribosomal subunit protein uS10 (103 aa).

This sequence belongs to the universal ribosomal protein uS10 family. In terms of assembly, part of the 30S ribosomal subunit.

In terms of biological role, involved in the binding of tRNA to the ribosomes. The sequence is that of Small ribosomal subunit protein uS10 from Alcanivorax borkumensis (strain ATCC 700651 / DSM 11573 / NCIMB 13689 / SK2).